The following is a 310-amino-acid chain: Vomeronasal type-1 receptor 50 (310 aa).

Over 1–16 (MSKANLLHTDNNMKIT) the chain is Extracellular. A helical transmembrane segment spans residues 17-37 (LFSEVSVGISANSILFVVHLC). Residues 38–50 (KLLHENKPKPIDL) lie on the Cytoplasmic side of the membrane. Residues 51 to 71 (YIAFFSITQLMLLITMGLIAV) form a helical membrane-spanning segment. The Extracellular portion of the chain corresponds to 72-93 (DMFMPWGRWDSTTCQSLIYLHR). Residues cysteine 85 and cysteine 172 are joined by a disulfide bond. The helical transmembrane segment at 94 to 114 (LLRGLTFCATCLLNVLWTITL) threads the bilayer. Topologically, residues 115–134 (SPRSSCLTKFKHKSPHHISG) are cytoplasmic. Residues 135–155 (AFLFFCVLYMSFSSHLLVSII) form a helical membrane-spanning segment. Residues 156–193 (ATFNSTSDNFLYVTQSCSILPVSYSRTSILSTMMTMRE) are Extracellular-facing. N-linked (GlcNAc...) asparagine glycosylation is present at asparagine 159. A helical membrane pass occupies residues 194 to 214 (AFLIGLMALSSGYVVVLLWRH). The Cytoplasmic portion of the chain corresponds to 215–237 (KKQARHLHSTSLSSKASPEQRAT). The chain crosses the membrane as a helical span at residues 238–258 (STIMLLMGFFVVLYILDTVIF). Over 259–269 (QARLKFKDVST) the chain is Extracellular. Residues 270–290 (FFCVKIIISHSYATFSPFVFI) traverse the membrane as a helical segment. Over 291-310 (CNDKYMIKFVTSMCGRIVNV) the chain is Cytoplasmic.

Belongs to the G-protein coupled receptor 1 family. In terms of tissue distribution, expressed in a subset of sensory neurons located in the apical layer of the vomeronasal organ.

The protein resides in the cell membrane. In terms of biological role, putative pheromone receptor implicated in the regulation of social and reproductive behavior. This chain is Vomeronasal type-1 receptor 50 (Vmn1r50), found in Mus musculus (Mouse).